The sequence spans 391 residues: Mannose-6-phosphate isomerase (391 aa).

Zn(2+) contacts are provided by Q97, H99, E134, and H255. Residue R274 is part of the active site.

The protein belongs to the mannose-6-phosphate isomerase type 1 family. The cofactor is Zn(2+).

The protein localises to the cytoplasm. It carries out the reaction D-mannose 6-phosphate = D-fructose 6-phosphate. Functionally, involved in the conversion of glucose to GDP-L-fucose, which can be converted to L-fucose, a capsular polysaccharide. In Salmonella typhimurium (strain LT2 / SGSC1412 / ATCC 700720), this protein is Mannose-6-phosphate isomerase (manA).